The primary structure comprises 616 residues: Chaperone protein HscA (616 aa).

It belongs to the heat shock protein 70 family.

Functionally, chaperone involved in the maturation of iron-sulfur cluster-containing proteins. Has a low intrinsic ATPase activity which is markedly stimulated by HscB. Involved in the maturation of IscU. In Photorhabdus laumondii subsp. laumondii (strain DSM 15139 / CIP 105565 / TT01) (Photorhabdus luminescens subsp. laumondii), this protein is Chaperone protein HscA.